Reading from the N-terminus, the 259-residue chain is Thiazole synthase (259 aa).

Lysine 100 (schiff-base intermediate with DXP) is an active-site residue. 1-deoxy-D-xylulose 5-phosphate is bound by residues glycine 161, 187–188 (AG), and 209–210 (NT).

The protein belongs to the ThiG family. As to quaternary structure, homotetramer. Forms heterodimers with either ThiH or ThiS.

It localises to the cytoplasm. It carries out the reaction [ThiS sulfur-carrier protein]-C-terminal-Gly-aminoethanethioate + 2-iminoacetate + 1-deoxy-D-xylulose 5-phosphate = [ThiS sulfur-carrier protein]-C-terminal Gly-Gly + 2-[(2R,5Z)-2-carboxy-4-methylthiazol-5(2H)-ylidene]ethyl phosphate + 2 H2O + H(+). It functions in the pathway cofactor biosynthesis; thiamine diphosphate biosynthesis. Its function is as follows. Catalyzes the rearrangement of 1-deoxy-D-xylulose 5-phosphate (DXP) to produce the thiazole phosphate moiety of thiamine. Sulfur is provided by the thiocarboxylate moiety of the carrier protein ThiS. In vitro, sulfur can be provided by H(2)S. This chain is Thiazole synthase, found in Methylobacillus flagellatus (strain ATCC 51484 / DSM 6875 / VKM B-1610 / KT).